A 1129-amino-acid polypeptide reads, in one-letter code: Phytochrome A (1129 aa).

In terms of domain architecture, GAF spans 217 to 399 (SMERLCDTMV…VFAIHVSKEL (183 aa)). A phytochromobilin-binding site is contributed by cysteine 322. 2 consecutive PAS domains span residues 622 to 692 (VTSE…LQGK) and 755 to 826 (DYKA…VNLG). The Histidine kinase domain occupies 906 to 1123 (YLRRQAKNPL…TFIITVELAA (218 aa)).

This sequence belongs to the phytochrome family. As to quaternary structure, homodimer. In terms of processing, contains one covalently linked phytochromobilin chromophore.

Functionally, regulatory photoreceptor which exists in two forms that are reversibly interconvertible by light: the Pr form that absorbs maximally in the red region of the spectrum and the Pfr form that absorbs maximally in the far-red region. Photoconversion of Pr to Pfr induces an array of morphogenic responses, whereas reconversion of Pfr to Pr cancels the induction of those responses. Pfr controls the expression of a number of nuclear genes including those encoding the small subunit of ribulose-bisphosphate carboxylase, chlorophyll A/B binding protein, protochlorophyllide reductase, rRNA, etc. It also controls the expression of its own gene(s) in a negative feedback fashion. The protein is Phytochrome A (PHYA) of Petroselinum crispum (Parsley).